Consider the following 1163-residue polypeptide: Pesticidal crystal protein Cry26Aa (1163 aa).

The protein belongs to the delta endotoxin family.

Promotes colloidosmotic lysis by binding to the midgut epithelial cells of insects. The polypeptide is Pesticidal crystal protein Cry26Aa (cry26Aa) (Bacillus thuringiensis subsp. finitimus).